The primary structure comprises 155 residues: Deoxyuridine 5'-triphosphate nucleotidohydrolase (155 aa).

Substrate-binding positions include 71–73 (RSG), asparagine 84, 88–90 (TID), and lysine 98.

Belongs to the dUTPase family. Requires Mg(2+) as cofactor.

The catalysed reaction is dUTP + H2O = dUMP + diphosphate + H(+). It participates in pyrimidine metabolism; dUMP biosynthesis; dUMP from dCTP (dUTP route): step 2/2. Functionally, this enzyme is involved in nucleotide metabolism: it produces dUMP, the immediate precursor of thymidine nucleotides and it decreases the intracellular concentration of dUTP so that uracil cannot be incorporated into DNA. The polypeptide is Deoxyuridine 5'-triphosphate nucleotidohydrolase (Corynebacterium jeikeium (strain K411)).